Here is a 674-residue protein sequence, read N- to C-terminus: Sodium/myo-inositol cotransporter 2 (674 aa).

Residues 1–27 (MESSPSSPQPTQSDPLAVFPQRTLEPA) lie on the Extracellular side of the membrane. Residues 28–48 (DIAVLVLYFLFVLAVGLWSTV) traverse the membrane as a helical segment. At 49–56 (KTRRDTVK) the chain is on the cytoplasmic side. Residues 57 to 77 (GYFLAGGDMVWWPVGASLFAS) traverse the membrane as a helical segment. The Extracellular segment spans residues 78–102 (NVGSGHFVGLAGSGAAAGLSVTAYE). Residues 103-123 (FNGIFSVLMLAWIFLPIYIAG) traverse the membrane as a helical segment. The Cytoplasmic segment spans residues 124–140 (QVTTMPEYLRKRFGGSR). Residues 141–161 (IPITLAVLYLFIYIFTKISVD) form a helical membrane-spanning segment. Topologically, residues 162–180 (MYAGAIFIQQSLHLNLYLA) are extracellular. The chain crosses the membrane as a helical span at residues 181 to 201 (IVGLLAITALYTIAGGLAAVI). Topologically, residues 202–208 (YTDALQT) are cytoplasmic. Residues 209–229 (LIMLIGALTLMGYSFAAVGGM) form a helical membrane-spanning segment. Over 230–272 (EGLKEKYFLALASNRSGNSSCGLPREDAFHIFRDPLTSDLPWP) the chain is Extracellular. A helical transmembrane segment spans residues 273–293 (GILFGMSIPSLWYWCTDQVIV). The Cytoplasmic segment spans residues 294-308 (QRTLAAKNLSHAKGG). A helical membrane pass occupies residues 309–329 (SLMAAYLKVLPLFIMVFPGMV). Topologically, residues 330 to 374 (SRVLFPDQVACADPEICQKVCSNPAGCSDIAYPKLVLELLPMGLR) are extracellular. The chain crosses the membrane as a helical span at residues 375 to 397 (GLMMAVMVAALMSSLTSIFNSAS). Over 398-418 (TIFTMDLWNHLRPRASERELM) the chain is Cytoplasmic. The helical transmembrane segment at 419 to 439 (IVGRVFVLLLVLVSILWIPVV) threads the bilayer. At 440-446 (QASQGGQ) the chain is on the extracellular side. The helical transmembrane segment at 447–467 (LFIYIQSISSYLQPPVAVVFI) threads the bilayer. Over 468–479 (MGCFWKRTNEKG) the chain is Cytoplasmic. Residues 480-500 (AFSGLILGLLLGLVRLVLDFI) traverse the membrane as a helical segment. Over 501–518 (YPQPRCDQPDERPAVVRD) the chain is Extracellular. The helical transmembrane segment at 519 to 539 (VHYLYFSMILSSVTLVTVSTV) threads the bilayer. Residues 540 to 653 (SWCTAPPTQE…SLEEIPLVKT (114 aa)) lie on the Cytoplasmic side of the membrane. A helical membrane pass occupies residues 654–674 (LLDINLIVCISCAIFLWGYFA).

Belongs to the sodium:solute symporter (SSF) (TC 2.A.21) family.

The protein resides in the membrane. It localises to the apical cell membrane. The enzyme catalyses myo-inositol(out) + 2 Na(+)(out) = myo-inositol(in) + 2 Na(+)(in). The catalysed reaction is 1D-chiro-inositol(out) + 2 Na(+)(out) = 1D-chiro-inositol(in) + 2 Na(+)(in). It catalyses the reaction D-glucose(out) + 2 Na(+)(out) = D-glucose(in) + 2 Na(+)(in). It carries out the reaction D-xylose(out) + 2 Na(+)(out) = D-xylose(in) + 2 Na(+)(in). Its activity is regulated as follows. MI transport activity inhibited by D-chiro-inositol (DCI), phlorizin (Pz) and sodium (Na(+)). Insulin increases D-chiro-inositol uptake. In terms of biological role, involved in the sodium-dependent cotransport of myo-inositol (MI) with a Na(+):MI stoichiometry of 2:1. Exclusively responsible for apical MI transport and absorption in intestine. Can also transport D-chiro-inositol (DCI) but not L-fucose. Exhibits stereospecific cotransport of both D-glucose and D-xylose. May induce apoptosis through the TNF-alpha, PDCD1 pathway. May play a role in the regulation of MI concentration in serum, involving reabsorption in at least the proximal tubule of the kidney. The chain is Sodium/myo-inositol cotransporter 2 from Sus scrofa (Pig).